Reading from the N-terminus, the 360-residue chain is Photosystem II protein D1 (360 aa).

Helical transmembrane passes span 29 to 46 (YIGWFGCLMFPTLLTATS), 118 to 133 (HFLLGVASYMGREWEL), and 142 to 156 (WIFVAFSAPVAAASA). Residue His118 participates in chlorophyll a binding. Pheophytin a is bound at residue Tyr126. The [CaMn4O5] cluster site is built by Asp170 and Glu189. A helical membrane pass occupies residues 197 to 218 (FHMAGVAGVFGGSLFSAMHGSL). His198 contacts chlorophyll a. A quinone-binding positions include His215 and 264–265 (SF). His215 provides a ligand contact to Fe cation. His272 serves as a coordination point for Fe cation. A helical transmembrane segment spans residues 274 to 288 (FLALWPVLGIWLTAM). Residues His332, Glu333, Asp342, and Ala344 each contribute to the [CaMn4O5] cluster site. A propeptide spanning residues 345-360 (SGDVLPVAFTAPAVNA) is cleaved from the precursor.

It belongs to the reaction center PufL/M/PsbA/D family. In terms of assembly, PSII is composed of 1 copy each of membrane proteins PsbA, PsbB, PsbC, PsbD, PsbE, PsbF, PsbH, PsbI, PsbJ, PsbK, PsbL, PsbM, PsbT, PsbX, PsbY, PsbZ, Psb30/Ycf12, at least 3 peripheral proteins of the oxygen-evolving complex and a large number of cofactors. It forms dimeric complexes. The cofactor is The D1/D2 heterodimer binds P680, chlorophylls that are the primary electron donor of PSII, and subsequent electron acceptors. It shares a non-heme iron and each subunit binds pheophytin, quinone, additional chlorophylls, carotenoids and lipids. D1 provides most of the ligands for the Mn4-Ca-O5 cluster of the oxygen-evolving complex (OEC). There is also a Cl(-1) ion associated with D1 and D2, which is required for oxygen evolution. The PSII complex binds additional chlorophylls, carotenoids and specific lipids.. In terms of processing, tyr-161 forms a radical intermediate that is referred to as redox-active TyrZ, YZ or Y-Z. C-terminally processed by CTPA; processing is essential to allow assembly of the oxygen-evolving complex and thus photosynthetic growth.

It localises to the plastid. Its subcellular location is the chloroplast thylakoid membrane. The catalysed reaction is 2 a plastoquinone + 4 hnu + 2 H2O = 2 a plastoquinol + O2. Photosystem II (PSII) is a light-driven water:plastoquinone oxidoreductase that uses light energy to abstract electrons from H(2)O, generating O(2) and a proton gradient subsequently used for ATP formation. It consists of a core antenna complex that captures photons, and an electron transfer chain that converts photonic excitation into a charge separation. The D1/D2 (PsbA/PsbD) reaction center heterodimer binds P680, the primary electron donor of PSII as well as several subsequent electron acceptors. The chain is Photosystem II protein D1 from Thalassiosira pseudonana (Marine diatom).